We begin with the raw amino-acid sequence, 213 residues long: MEYEDLELITIWPSPTKNKLCQFIKQNLSKEHVVTQLFFIDATSSFPLSQFQKLVPPTLPENVRIYENIRINTCLDLEELSAITVKLLQILSMNKINAQRGTEDAVTEPLKIILYINGLEVMFRNSQFKSSPQRSHELLRDTLLKLRVMGNDENENASIRTLLEFPKEQLLDYYLKKNNNTRTSSVRSKRRRIKNGDSLAEYIWKYYADSLFE.

The protein belongs to the CSM2 family. In terms of assembly, component of the SHU complex composed of at least CSM2, PSY3, SHU1 and SHU2.

It is found in the cytoplasm. The protein resides in the nucleus. In terms of biological role, involved in chromosome segregation during meiosis. Promotes efficient recombinational repair and functions in the protection of the genome from spontaneous and induced DNA damage like mutations and gross chromosomal rearrangements (GCRs). This is Chromosome segregation in meiosis protein 2 (CSM2) from Saccharomyces cerevisiae (strain ATCC 204508 / S288c) (Baker's yeast).